The sequence spans 2172 residues: Non-reducing polyketide synthase dpfgA (2172 aa).

The N-terminal acylcarrier protein transacylase domain (SAT) stretch occupies residues 74-181 (EWIKCGNSSL…LALCVGALVD (108 aa)). The Ketosynthase family 3 (KS3) domain occupies 389 to 783 (DDSIAIIGVS…GTNAAMLVCQ (395 aa)). Residues cysteine 529, histidine 665, and histidine 706 each act as for beta-ketoacyl synthase activity in the active site. Residues 895-1197 (VFAGQTGRQA…SFHSILLQGQ (303 aa)) form a malonyl-CoA:ACP transacylase (MAT) domain region. The active-site For acyl/malonyl transferase activity is serine 981. Residues 1270 to 1403 (PELVSLAGPT…GTINWQGQGC (134 aa)) form an N-terminal hotdog fold region. The 312-residue stretch at 1270-1581 (PELVSLAGPT…LKRIPIRSLQ (312 aa)) folds into the PKS/mFAS DH domain. A product template (PT) domain region spans residues 1277–1575 (GPTDGETVEF…EIIGASLKRI (299 aa)). A C-terminal hotdog fold region spans residues 1428–1581 (SASTVQGLFV…LKRIPIRSLQ (154 aa)). Disordered stretches follow at residues 1608–1631 (DSDSDLPDSEANSPRVGSDLHADF) and 1650–1672 (YPMDSSSFSSAQPPSSASSVLSD). Low complexity predominate over residues 1650-1668 (YPMDSSSFSSAQPPSSASS). The 77-residue stretch at 1671-1747 (SDHDQESTAL…DLYRMVLNHD (77 aa)) folds into the Carrier domain. Serine 1707 carries the O-(pantetheine 4'-phosphoryl)serine modification. The segment at 1751 to 1773 (DRGSTVLSDKAPKSKSDSSLHGQ) is disordered. The segment at 1975-2155 (EFLHRVLSRL…DAGFIHVDWT (181 aa)) is methyltransferase (CMeT) domain.

The protein operates within secondary metabolite biosynthesis; terpenoid biosynthesis. Its function is as follows. Non-reducing polyketide synthase; part of the gene cluster that mediates the biosynthesis of diterpenoid pyrones. The first step of the pathway is the synthesis of the alpha-pyrone moiety by the polyketide synthase dpfgA via condensation of one acetyl-CoA starter unit with 3 malonyl-CoA units and 2 methylations. The alpha-pyrone is then combined with geranylgeranyl pyrophosphate (GGPP) formed by the GGPP synthase dpfgD through the action of the prenyltransferase dpfgC to yield a linear alpha-pyrone diterpenoid. Subsequent steps in the diterpenoid pyrone biosynthetic pathway involve the decalin core formation, which is initiated by the epoxidation of the C10-C11 olefin by the FAD-dependent oxidoreductase dpfgE, and is followed by a cyclization cascade catalyzed by the terpene cyclase dpfgB. The short chain dehydrogenase/reductase dpfgG then oxidizes the 8S hydroxy group to a ketone and the short chain dehydrogenase/reductase dpfgH reduces the ketone to the 8R hydroxy group to yield higginsianin B. Higginsianin B is further methylated by the methyltransferase dpfgI to produce the intermediate named FDDP B. The cytochrome P450 monooxygenase dfgpJ then catalyzes a three-step oxidation at C-27 to generate a carboxylic acid as well as C-26 hydroxylation. Finally, methyltransferase dpfgK methylates the carboxylic acid generated by dpfgJ, yielding the final diterpenoid pyrones from the pathway which were named FDDP D and FDDP E. The chain is Non-reducing polyketide synthase dpfgA from Gibberella zeae (strain ATCC MYA-4620 / CBS 123657 / FGSC 9075 / NRRL 31084 / PH-1) (Wheat head blight fungus).